The chain runs to 377 residues: Leukocyte elastase inhibitor (377 aa).

Methionine 1 is modified (N-acetylmethionine). Lysine 136 is subject to N6-acetyllysine. Serine 298 bears the Phosphoserine mark. Residues 349-377 (EFVADHPFIFFIRHKPSSNILFLGRLSSP) form a CARD-binding motif (CBM) region.

It belongs to the serpin family. Ov-serpin subfamily. In terms of assembly, monomer. Interacts (via C-terminus) with CASP1; CASP4 (via CARD domain) and CASP5; these interactions regulate the activity of inflammatory caspases. Interacts with PRTN3. Interacts with GZMH.

Its subcellular location is the secreted. The protein resides in the cytoplasm. The protein localises to the cytolytic granule. It localises to the early endosome. Neutrophil serine protease inhibitor that plays an essential role in the regulation of the innate immune response, inflammation and cellular homeostasis. Acts primarily to protect the cell from proteases released in the cytoplasm during stress or infection. These proteases are important in killing microbes but when released from granules, these potent enzymes also destroy host proteins and contribute to mortality. Regulates the activity of the neutrophil proteases elastase, cathepsin G, proteinase-3, chymase, chymotrypsin, and kallikrein-3. Also acts as a potent intracellular inhibitor of GZMH by directly blocking its proteolytic activity. During inflammation, limits the activity of inflammatory caspases CASP1, CASP4 and CASP5 by suppressing their caspase-recruitment domain (CARD) oligomerization and enzymatic activation. When secreted, promotes the proliferation of beta-cells via its protease inhibitory function. This is Leukocyte elastase inhibitor (SERPINB1) from Bos taurus (Bovine).